Consider the following 209-residue polypeptide: Transcription elongation factor A protein-like 4 (209 aa).

An N-acetylmethionine modification is found at Met-1. A disordered region spans residues 1 to 125; the sequence is MEKLYNENEG…VPRKAKRKTN (125 aa). Positions 25–96 are enriched in basic and acidic residues; it reads QDERKPEVAC…GSEREGKPES (72 aa). A phosphoserine mark is found at Ser-88 and Ser-96.

This sequence belongs to the TFS-II family. TFA subfamily.

It localises to the nucleus. May be involved in transcriptional regulation. This is Transcription elongation factor A protein-like 4 (TCEAL4) from Pongo abelii (Sumatran orangutan).